A 475-amino-acid polypeptide reads, in one-letter code: MNNHIQTAISEQGIEAYLHAQQHKSLLRFLTCGSVDDGKSTLIGRLLHDSQQIYEDQLKALESDSQKLGTTGEKLDLALLVDGLQAEREQGITIDVAYRYFSTAKRKFIISDTPGHEQYTRNMATGASTCDLAIILIDARKGVLDQTRRHSFIASLLGIKQFVVAVNKMDLVEFSQEVFERISAEYREFAKKLSVDTIHIVPVSALDGDNVVNPSDKLAWYQGETLLSLLESAEVERELERHPVRLPVQYVNRPNLDFRGFAGTLASGILRVGDKLAVLPSGKESTVTRIVTFDGDLDYALPGQAITVTFADEIDISRGDLLVDAARKPLVTQNLLAHIVWMGEESLQPGRVYDVKLATKKSRGQVEAIRHRIEINKLDELDASELKLNEIGLCELSLTDPVAFDPYQEIRDTGSFILIDRLTNVTVGAGMIVEGLAAKVATGHYSEFEVELNALVRKHFPHWQALTISNDASKE.

One can recognise a tr-type G domain in the interval 24–240 (KSLLRFLTCG…ESAEVERELE (217 aa)). The segment at 33 to 40 (GSVDDGKS) is G1. 33–40 (GSVDDGKS) serves as a coordination point for GTP. The tract at residues 91–95 (GITID) is G2. A G3 region spans residues 112–115 (DTPG). Residues 112-116 (DTPGH) and 167-170 (NKMD) contribute to the GTP site. The interval 167–170 (NKMD) is G4. Positions 204 to 206 (SAL) are G5.

This sequence belongs to the TRAFAC class translation factor GTPase superfamily. Classic translation factor GTPase family. CysN/NodQ subfamily. Heterodimer composed of CysD, the smaller subunit, and CysN.

The catalysed reaction is sulfate + ATP + H(+) = adenosine 5'-phosphosulfate + diphosphate. Its pathway is sulfur metabolism; hydrogen sulfide biosynthesis; sulfite from sulfate: step 1/3. Functionally, with CysD forms the ATP sulfurylase (ATPS) that catalyzes the adenylation of sulfate producing adenosine 5'-phosphosulfate (APS) and diphosphate, the first enzymatic step in sulfur assimilation pathway. APS synthesis involves the formation of a high-energy phosphoric-sulfuric acid anhydride bond driven by GTP hydrolysis by CysN coupled to ATP hydrolysis by CysD. The polypeptide is Sulfate adenylyltransferase subunit 1 (Aeromonas hydrophila subsp. hydrophila (strain ATCC 7966 / DSM 30187 / BCRC 13018 / CCUG 14551 / JCM 1027 / KCTC 2358 / NCIMB 9240 / NCTC 8049)).